We begin with the raw amino-acid sequence, 930 residues long: Bifunctional uridylyltransferase/uridylyl-removing enzyme (930 aa).

Residues 1 to 387 (MAPASEAGPA…IMGLFRRKKR (387 aa)) are uridylyltransferase. Residues 388-741 (LKPEYSLVNG…LDPDPDRDAT (354 aa)) form a uridylyl-removing region. The region spanning 504–626 (VDEHTIQCIS…VRSKKRLDLL (123 aa)) is the HD domain. ACT domains lie at 742–818 (RACF…VVAR) and 852–927 (IIEV…GAER).

This sequence belongs to the GlnD family. Mg(2+) is required as a cofactor.

The catalysed reaction is [protein-PII]-L-tyrosine + UTP = [protein-PII]-uridylyl-L-tyrosine + diphosphate. The enzyme catalyses [protein-PII]-uridylyl-L-tyrosine + H2O = [protein-PII]-L-tyrosine + UMP + H(+). With respect to regulation, uridylyltransferase (UTase) activity is inhibited by glutamine, while glutamine activates uridylyl-removing (UR) activity. In terms of biological role, modifies, by uridylylation and deuridylylation, the PII regulatory proteins (GlnB and homologs), in response to the nitrogen status of the cell that GlnD senses through the glutamine level. Under low glutamine levels, catalyzes the conversion of the PII proteins and UTP to PII-UMP and PPi, while under higher glutamine levels, GlnD hydrolyzes PII-UMP to PII and UMP (deuridylylation). Thus, controls uridylylation state and activity of the PII proteins, and plays an important role in the regulation of nitrogen fixation and metabolism. This chain is Bifunctional uridylyltransferase/uridylyl-removing enzyme, found in Cereibacter sphaeroides (strain ATCC 17023 / DSM 158 / JCM 6121 / CCUG 31486 / LMG 2827 / NBRC 12203 / NCIMB 8253 / ATH 2.4.1.) (Rhodobacter sphaeroides).